The chain runs to 553 residues: Phosphomethylpyrimidine synthase (553 aa).

Residues Asn192, Met221, Tyr250, His286, 306-308, 347-350, and Glu386 each bind substrate; these read SRG and DGLR. A Zn(2+)-binding site is contributed by His390. A substrate-binding site is contributed by Tyr413. His454 is a binding site for Zn(2+). Positions 534, 537, and 542 each coordinate [4Fe-4S] cluster.

Belongs to the ThiC family. In terms of assembly, homodimer. The cofactor is [4Fe-4S] cluster.

The enzyme catalyses 5-amino-1-(5-phospho-beta-D-ribosyl)imidazole + S-adenosyl-L-methionine = 4-amino-2-methyl-5-(phosphooxymethyl)pyrimidine + CO + 5'-deoxyadenosine + formate + L-methionine + 3 H(+). Its pathway is cofactor biosynthesis; thiamine diphosphate biosynthesis. Functionally, catalyzes the synthesis of the hydroxymethylpyrimidine phosphate (HMP-P) moiety of thiamine from aminoimidazole ribotide (AIR) in a radical S-adenosyl-L-methionine (SAM)-dependent reaction. The protein is Phosphomethylpyrimidine synthase of Anaplasma marginale (strain St. Maries).